A 562-amino-acid polypeptide reads, in one-letter code: Cell division protein FtsZ (562 aa).

Residues 23 to 27 (GAGGN), 110 to 112 (GTG), Glu141, Arg145, and Asp189 each bind GTP. The segment covering 404–413 (PAAARPAQQP) has biased composition (low complexity). Disordered stretches follow at residues 404 to 428 (PAAA…RLDP) and 462 to 562 (ETAQ…RQAN). Positions 418–428 (FRPDPQLRLDP) are enriched in basic and acidic residues. Low complexity-rich tracts occupy residues 464–486 (AQAA…QPQR) and 500–510 (GLLRRPAAAQP).

This sequence belongs to the FtsZ family. In terms of assembly, homodimer. Polymerizes to form a dynamic ring structure in a strictly GTP-dependent manner. Interacts directly with several other division proteins. Interacts with FtsZ-like protein (also called FtsZm).

It is found in the cytoplasm. Functionally, essential cell division protein that forms a contractile ring structure (Z ring) at the future cell division site. The regulation of the ring assembly controls the timing and the location of cell division. One of the functions of the FtsZ ring is to recruit other cell division proteins to the septum to produce a new cell wall between the dividing cells. Binds GTP and shows GTPase activity. Mild overexpression impairs cell division, leading to very elongated cells. Isolated protein forms filaments and bundles in the presence of GTP. This is Cell division protein FtsZ from Magnetospirillum gryphiswaldense (strain DSM 6361 / JCM 21280 / NBRC 15271 / MSR-1).